Consider the following 1734-residue polypeptide: Complement C4-A (1734 aa).

A signal peptide spans 1 to 19; the sequence is MRLLWGLAWVFSFCASSLQ. Cysteine 66 and cysteine 95 are oxidised to a cystine. N-linked (GlcNAc...) asparagine glycosylation is present at asparagine 224. Cysteine 633 and cysteine 667 form a disulfide bridge. Residues 674–677 constitute a propeptide that is removed on maturation; sequence RQKR. 3 cysteine pairs are disulfide-bonded: cysteine 700–cysteine 726, cysteine 701–cysteine 733, and cysteine 714–cysteine 734. Residues 700 to 734 enclose the Anaphylatoxin-like domain; the sequence is CCQDGMTKLPMKRTCEQRAARVPQQACREPFLSCC. Asparagine 743 and asparagine 859 each carry an N-linked (GlcNAc...) asparagine glycan. Residues 1002–1005 constitute a cross-link (isoglutamyl cysteine thioester (Cys-Gln)); sequence CAEQ. N-linked (GlcNAc...) asparagine glycans are attached at residues asparagine 1128 and asparagine 1383. Tyrosine 1409 carries the post-translational modification Sulfotyrosine. A propeptide spanning residues 1437–1443 is cleaved from the precursor; sequence RRSRRRR. Disulfide bonds link cysteine 1461-cysteine 1525, cysteine 1573-cysteine 1578, cysteine 1585-cysteine 1663, cysteine 1608-cysteine 1732, and cysteine 1708-cysteine 1717. Residues 1585 to 1732 form the NTR domain; it reads CPRLLRSLER…FLMEFSSRGC (148 aa).

In absence of complement activation, circulates in blood as a disulfide-linked trimer of an alpha, beta and gamma chain. As to quaternary structure, complement C4b is composed of Complement C4b-A, Complement C4 beta and Complement C4 gamma chains that are associated via disulfide bonds. Non-enzymatic component of the C3 convertase, also named C4bC2b, composed of the serine protease complement C2b (C2), as well as complement C4b. Non-enzymatic component of the C5 convertase, also named C4bC2bC3b, composed of the serine protease complement C2b (C2), complement C3b, as well as complement C4b. In terms of processing, prior to secretion, the single-chain precursor is enzymatically cleaved by plasminogen (PLG) to yield non-identical chains alpha, beta and gamma. During activation of the complement systems, the alpha chain is cleaved into C4a and C4b by different proteases depending on the complement pathway: C4b stays linked to the beta and gamma chains, while C4a is released in the plasma. The alpha chain is cleaved by C1S to generate C4a and C4b following activation by the classical complement system. The alpha chain is cleaved to generate C4a and C4b by MASP2 following activation by the lectin complement system. The alpha chain is cleaved by GZMK to generate C4a and C4b following activation by the GZMK complement system. Further degradation of C4b by C1 into the inactive fragments C4c and C4d blocks the generation of C3 convertase. The proteolytic cleavages often are incomplete so that many structural forms can be found in plasma. Upon activation, the internal thioester bond reacts with carbohydrate antigens on the target surface to form amide or ester bonds, leading to covalent association with the surface of pathogens. Post-translationally, complement C4b interacts with complement C3b via a thioester linkage. In terms of processing, N- and O-glycosylated. O-glycosylated with a core 1 or possibly core 8 glycan.

It is found in the secreted. The protein localises to the synapse. It localises to the cell projection. The protein resides in the axon. Its subcellular location is the dendrite. It is found in the cell surface. Its activity is regulated as follows. Specifically inhibited by nanobody hC4Nb8, inhibiting the classical complement pathway. In terms of biological role, precursor of non-enzymatic components of the classical, lectin and GZMK complement pathways, which consist in a cascade of proteins that leads to phagocytosis and breakdown of pathogens and signaling that strengthens the adaptive immune system. Its function is as follows. Non-enzymatic component of C3 and C5 convertases. Generated following cleavage by complement proteases (C1S, MASP2 or GZMK, depending on the complement pathway), it covalently attaches to the surface of pathogens, where it acts as an opsonin that marks the surface of antigens for removal. It then recruits the serine protease complement C2b to form the C3 and C5 convertases, which cleave and activate C3 and C5, respectively, the next components of the complement pathways. Complement C4b-A isotype is responsible for effective binding to form amide bonds with immune aggregates or protein antigens, while complement C4b-B isotype catalyzes the transacylation of the thioester carbonyl group to form ester bonds with carbohydrate antigens. Functionally, putative humoral mediator released following cleavage by complement proteases (C1S, MASP2 or GZMK, depending on the complement pathway). While it is strongly similar to anaphylatoxins, its role is unclear. Was reported to act as a mediator of local inflammatory process; however these effects were probably due to contamination with C3a and/C5a anaphylatoxins in biological assays. This chain is Complement C4-A, found in Mus musculus (Mouse).